The following is a 155-amino-acid chain: FAD synthase (155 aa).

Residues 9–10 (TF), 14–17 (HPGH), and Asp92 each bind ATP.

It belongs to the archaeal FAD synthase family. As to quaternary structure, homodimer. It depends on a divalent metal cation as a cofactor.

The catalysed reaction is FMN + ATP + H(+) = FAD + diphosphate. The protein operates within cofactor biosynthesis; FAD biosynthesis; FAD from FMN: step 1/1. In terms of biological role, catalyzes the transfer of the AMP portion of ATP to flavin mononucleotide (FMN) to produce flavin adenine dinucleotide (FAD) coenzyme. The protein is FAD synthase of Archaeoglobus profundus (strain DSM 5631 / JCM 9629 / NBRC 100127 / Av18).